The sequence spans 87 residues: Small ribosomal subunit protein uS17 (87 aa).

Belongs to the universal ribosomal protein uS17 family. Part of the 30S ribosomal subunit.

Its function is as follows. One of the primary rRNA binding proteins, it binds specifically to the 5'-end of 16S ribosomal RNA. This chain is Small ribosomal subunit protein uS17, found in Staphylococcus haemolyticus (strain JCSC1435).